Consider the following 644-residue polypeptide: Pentatricopeptide repeat-containing protein At1g12775, mitochondrial (644 aa).

A mitochondrion-targeting transit peptide spans 1-53; the sequence is MVRMMIRRLSSQASRFVQPRLLETGTLRIALINCPNELLFCCERGFSTFSDRN. PPR repeat units lie at residues 87 to 121, 122 to 156, 157 to 191, 192 to 226, 227 to 261, 262 to 296, 297 to 331, 332 to 366, 367 to 401, 402 to 436, 437 to 471, 472 to 506, 507 to 541, 542 to 576, and 577 to 611; these read TVIDFNRLFSAIAKTKQYELVLALCKQMESKGIAH, SIYTLSIMINCFCRCRKLSYAFSTMGKIMKLGYEP, DTVIFNTLLNGLCLECRVSEALELVDRMVEMGHKP, TLITLNTLVNGLCLNGKVSDAVVLIDRMVETGFQP, NEVTYGPVLNVMCKSGQTALAMELLRKMEERNIKL, DAVKYSIIIDGLCKDGSLDNAFNLFNEMEIKGFKA, DIITYNTLIGGFCNAGRWDDGAKLLRDMIKRKISP, NVVTFSVLIDSFVKEGKLREADQLLKEMMQRGIAP, NTITYNSLIDGFCKENRLEEAIQMVDLMISKGCDP, DIMTFNILINGYCKANRIDDGLELFREMSLRGVIA, NTVTYNTLVQGFCQSGKLEVAKKLFQEMVSRRVRP, DIVSYKILLDGLCDNGELEKALEIFGKIEKSKMEL, DIGIYMIIIHGMCNASKVDDAWDLFCSLPLKGVKL, DARAYNIMISELCRKDSLSKADILFRKMTEEGHAP, and DELTYNILIRAHLGDDDATTAAELIEEMKSSGFPA.

The protein belongs to the PPR family. P subfamily.

It localises to the mitochondrion. This chain is Pentatricopeptide repeat-containing protein At1g12775, mitochondrial, found in Arabidopsis thaliana (Mouse-ear cress).